Consider the following 261-residue polypeptide: tRNA pseudouridine synthase A (261 aa).

The active-site Nucleophile is aspartate 52. Position 110 (tyrosine 110) interacts with substrate.

This sequence belongs to the tRNA pseudouridine synthase TruA family. In terms of assembly, homodimer.

The enzyme catalyses uridine(38/39/40) in tRNA = pseudouridine(38/39/40) in tRNA. Its function is as follows. Formation of pseudouridine at positions 38, 39 and 40 in the anticodon stem and loop of transfer RNAs. In Coxiella burnetii (strain CbuK_Q154) (Coxiella burnetii (strain Q154)), this protein is tRNA pseudouridine synthase A.